The sequence spans 386 residues: S-adenosylmethionine synthase (386 aa).

H16 contacts ATP. Residue D18 coordinates Mg(2+). E44 provides a ligand contact to K(+). Residues E57 and Q100 each contribute to the L-methionine site. The tract at residues 100–110 (QSRDITQGVDR) is flexible loop. Residues 165–167 (DAK), D240, 246–247 (RK), A263, and K267 contribute to the ATP site. An L-methionine-binding site is contributed by D240. Residue K271 participates in L-methionine binding.

This sequence belongs to the AdoMet synthase family. As to quaternary structure, homotetramer; dimer of dimers. It depends on Mg(2+) as a cofactor. K(+) is required as a cofactor.

It is found in the cytoplasm. It catalyses the reaction L-methionine + ATP + H2O = S-adenosyl-L-methionine + phosphate + diphosphate. It functions in the pathway amino-acid biosynthesis; S-adenosyl-L-methionine biosynthesis; S-adenosyl-L-methionine from L-methionine: step 1/1. In terms of biological role, catalyzes the formation of S-adenosylmethionine (AdoMet) from methionine and ATP. The overall synthetic reaction is composed of two sequential steps, AdoMet formation and the subsequent tripolyphosphate hydrolysis which occurs prior to release of AdoMet from the enzyme. This Francisella tularensis subsp. tularensis (strain FSC 198) protein is S-adenosylmethionine synthase.